The primary structure comprises 101 residues: ATP synthase subunit c (101 aa).

2 helical membrane passes run 31–51 (AFAY…GAGQ) and 81–101 (AISE…IFVG).

This sequence belongs to the ATPase C chain family. F-type ATPases have 2 components, F(1) - the catalytic core - and F(0) - the membrane proton channel. F(1) has five subunits: alpha(3), beta(3), gamma(1), delta(1), epsilon(1). F(0) has three main subunits: a(1), b(2) and c(10-14). The alpha and beta chains form an alternating ring which encloses part of the gamma chain. F(1) is attached to F(0) by a central stalk formed by the gamma and epsilon chains, while a peripheral stalk is formed by the delta and b chains.

It localises to the cell membrane. In terms of biological role, f(1)F(0) ATP synthase produces ATP from ADP in the presence of a proton or sodium gradient. F-type ATPases consist of two structural domains, F(1) containing the extramembraneous catalytic core and F(0) containing the membrane proton channel, linked together by a central stalk and a peripheral stalk. During catalysis, ATP synthesis in the catalytic domain of F(1) is coupled via a rotary mechanism of the central stalk subunits to proton translocation. Functionally, key component of the F(0) channel; it plays a direct role in translocation across the membrane. A homomeric c-ring of between 10-14 subunits forms the central stalk rotor element with the F(1) delta and epsilon subunits. This is ATP synthase subunit c from Mesomycoplasma hyopneumoniae (strain 232) (Mycoplasma hyopneumoniae).